The chain runs to 247 residues: Bidirectional sugar transporter SWEET1 (247 aa).

Residues 1–6 are Extracellular-facing; it reads MNIAHT. The chain crosses the membrane as a helical span at residues 7-27; sequence IFGVFGNATALFLFLAPSITF. The 88-residue stretch at 7–94 folds into the MtN3/slv 1 domain; the sequence is IFGVFGNATA…LIFLFYAPKK (88 aa). Residues 28-41 lie on the Cytoplasmic side of the membrane; the sequence is KRIIKNKSTEQFSG. The helical transmembrane segment at 42–62 threads the bilayer; it reads IPYPMTLLNCLLSAWYGLPFV. Topologically, residues 63–71 are extracellular; sequence SKDNTLVST. Residues 72 to 92 traverse the membrane as a helical segment; that stretch reads INGTGAVIETVYVLIFLFYAP. Topologically, residues 93-98 are cytoplasmic; that stretch reads KKEKIK. A helical membrane pass occupies residues 99–119; the sequence is IFGIFSCVLAVFATVALVSLF. Over 120-127 the chain is Extracellular; it reads ALQGNGRK. Residues 128-148 traverse the membrane as a helical segment; sequence LFCGLAATVFSIIMYASPLSI. In terms of domain architecture, MtN3/slv 2 spans 130–213; it reads CGLAATVFSI…ILYFIYCGNK (84 aa). The Cytoplasmic portion of the chain corresponds to 149–162; sequence MRLVVKTKSVEFMP. Residues 163-183 traverse the membrane as a helical segment; it reads FFLSLFVFLCGTSWFVYGLIG. Residues 184–187 lie on the Extracellular side of the membrane; it reads RDPF. A helical transmembrane segment spans residues 188–208; the sequence is VAIPNGFGCALGTLQLILYFI. At 209–247 the chain is on the cytoplasmic side; that stretch reads YCGNKGEKSADAQKDEKSVEMKDDEKKQNVVNGKQDLQV. Over residues 221 to 236 the composition is skewed to basic and acidic residues; it reads QKDEKSVEMKDDEKKQ. A disordered region spans residues 221–247; it reads QKDEKSVEMKDDEKKQNVVNGKQDLQV. Residues 237–247 are compositionally biased toward polar residues; the sequence is NVVNGKQDLQV.

Belongs to the SWEET sugar transporter family. Forms homooligomers and heterooligomers with SWEET9, SWEET11, SWEET13, SWEET15, SWEET16 and SWEET17. In terms of tissue distribution, mainly expressed in flowers.

Its subcellular location is the cell membrane. It is found in the endoplasmic reticulum membrane. In terms of biological role, mediates both low-affinity uptake and efflux of sugar across the plasma membrane. Can transport glucose, and, to a lower extent, mannose, fructose and galactose. The sequence is that of Bidirectional sugar transporter SWEET1 from Arabidopsis thaliana (Mouse-ear cress).